The sequence spans 266 residues: Small ribosomal subunit protein uS2 (266 aa).

Belongs to the universal ribosomal protein uS2 family.

The sequence is that of Small ribosomal subunit protein uS2 from Bartonella tribocorum (strain CIP 105476 / IBS 506).